Reading from the N-terminus, the 443-residue chain is Thymidine phosphorylase (443 aa).

The protein belongs to the thymidine/pyrimidine-nucleoside phosphorylase family. As to quaternary structure, homodimer.

It carries out the reaction thymidine + phosphate = 2-deoxy-alpha-D-ribose 1-phosphate + thymine. The protein operates within pyrimidine metabolism; dTMP biosynthesis via salvage pathway; dTMP from thymine: step 1/2. Its function is as follows. The enzymes which catalyze the reversible phosphorolysis of pyrimidine nucleosides are involved in the degradation of these compounds and in their utilization as carbon and energy sources, or in the rescue of pyrimidine bases for nucleotide synthesis. This is Thymidine phosphorylase from Shewanella sp. (strain ANA-3).